A 142-amino-acid polypeptide reads, in one-letter code: Large ribosomal subunit protein uL13 (142 aa).

The protein belongs to the universal ribosomal protein uL13 family. Part of the 50S ribosomal subunit.

Its function is as follows. This protein is one of the early assembly proteins of the 50S ribosomal subunit, although it is not seen to bind rRNA by itself. It is important during the early stages of 50S assembly. This Pelobacter propionicus (strain DSM 2379 / NBRC 103807 / OttBd1) protein is Large ribosomal subunit protein uL13.